The following is a 501-amino-acid chain: Ribose import ATP-binding protein RbsA 1 (501 aa).

2 consecutive ABC transporter domains span residues 5 to 241 (LQLK…VGRK) and 252 to 495 (APGD…VGKL). 37–44 (GENGAGKS) is an ATP binding site.

The protein belongs to the ABC transporter superfamily. Ribose importer (TC 3.A.1.2.1) family. As to quaternary structure, the complex is composed of an ATP-binding protein (RbsA), two transmembrane proteins (RbsC) and a solute-binding protein (RbsB).

It localises to the cell inner membrane. It catalyses the reaction D-ribose(out) + ATP + H2O = D-ribose(in) + ADP + phosphate + H(+). Its function is as follows. Part of the ABC transporter complex RbsABC involved in ribose import. Responsible for energy coupling to the transport system. This chain is Ribose import ATP-binding protein RbsA 1, found in Escherichia coli O157:H7.